Consider the following 913-residue polypeptide: DNA mismatch repair protein MutS (913 aa).

ATP is bound at residue 720 to 727 (GPNASGKS).

The protein belongs to the DNA mismatch repair MutS family.

Functionally, this protein is involved in the repair of mismatches in DNA. It is possible that it carries out the mismatch recognition step. This protein has a weak ATPase activity. This is DNA mismatch repair protein MutS from Prochlorococcus marinus (strain MIT 9312).